The sequence spans 79 residues: Large ribosomal subunit protein eL38 (79 aa).

It belongs to the eukaryotic ribosomal protein eL38 family.

The chain is Large ribosomal subunit protein eL38 (RPL38) from Theileria parva (East coast fever infection agent).